Here is a 71-residue protein sequence, read N- to C-terminus: UPF0346 protein BcerKBAB4_2120 (71 aa).

This sequence belongs to the UPF0346 family.

In Bacillus mycoides (strain KBAB4) (Bacillus weihenstephanensis), this protein is UPF0346 protein BcerKBAB4_2120.